The following is a 255-amino-acid chain: Post-GPI attachment to proteins factor 2 (255 aa).

A run of 6 helical transmembrane segments spans residues 25 to 45 (LAALSLPLGGFFFCVVWSLLF), 80 to 100 (LAIFLHLPLRLAVAKIYLEYY), 111 to 131 (LGILACFLNVVEDLALFCLSF), 143 to 163 (NAFVVFIACSECYMLMSYLLN), 185 to 205 (LFLVNVLAFGLAGYCFVRHNA), and 209 to 229 (AGVYTFFALFEYIVVLTNMGF).

It belongs to the PGAP2 family.

The protein resides in the golgi apparatus membrane. The protein localises to the endoplasmic reticulum membrane. In terms of biological role, involved in the lipid remodeling steps of GPI-anchor maturation. Required for stable expression of GPI-anchored proteins at the cell surface. This is Post-GPI attachment to proteins factor 2 from Drosophila pseudoobscura pseudoobscura (Fruit fly).